Consider the following 209-residue polypeptide: Large ribosomal subunit protein uL3 (209 aa).

Glutamine 150 bears the N5-methylglutamine mark.

It belongs to the universal ribosomal protein uL3 family. Part of the 50S ribosomal subunit. Forms a cluster with proteins L14 and L19. Post-translationally, methylated by PrmB.

Functionally, one of the primary rRNA binding proteins, it binds directly near the 3'-end of the 23S rRNA, where it nucleates assembly of the 50S subunit. In Escherichia coli O139:H28 (strain E24377A / ETEC), this protein is Large ribosomal subunit protein uL3.